A 726-amino-acid polypeptide reads, in one-letter code: MELTNLIEKCTKLSKDFATEVEKLWNDELSSESGLSRKTRNVIRNILRDITKSLTTDKKSKCFCILERSTINGEQIKDVYKTIFNNGVDVESRINTTGKYVLFTVMTYAAAELRLIKSDEIFALLSRFFNMICDIHRKYGCGNMFVGIPAALIVLLEIDHINKLFSVFSTRYDAKAYLYTEYFLFLNINHYLLSGSDLFINVAYCAVSFSSPIRVPDYIMEALTFKACDHIMKSGDLKYTYAFTKKVKDLFNTKSDSIYQYVRLHEMSYDGVSEDTDDDDEVFAILNLSIDSSVDRYRNRVLLLTPEVASLRKEYSEAEPDYKYLMDEEVSAYDKHLPKPITNTGIEEPHATGGDKEDQPIKVVYPPNNDKDDAIKPHNPLEDPNYVPTITRTDIGIADYQLVINKLIEWLDKCEEECGNGGEFKTELEEAKRKLTELNAELSDKLSKIMSLERDSVHKTERIDRLTKEIKELRDIQNGTDDGSDSSEIDKKIIRELRESLDREREMRSKLEKELDTIRDGKVEGSCQRELELRRMWLKQRDDDLRAEIDKRRNVEWELSRLRRDIKECDKYKEDLDKAKATISNYVSRISTLESEIAKYQQDRDTLSVVRRELEEERRRVKDLESRLDECTRNQEDTQEVDALRSRIRELENKLTDCIESGGGNLTEISRLQSRISDLERQLNECRGNVTEISRLESRISDLERQLNDCRRNNETNAETERDATS.

The disordered stretch occupies residues 342–361; the sequence is TNTGIEEPHATGGDKEDQPI. Residues 347-360 show a composition bias toward basic and acidic residues; that stretch reads EEPHATGGDKEDQP. 4 repeat units span residues 612–634, 639–661, 667–689, and 691–713. The 4 X approximate tandem repeats stretch occupies residues 612 to 713; it reads RELEEERRRV…ERQLNDCRRN (102 aa).

Belongs to the poxviridae A25 protein family. In terms of assembly, interacts (via N-terminus) with protein A26.

The protein localises to the virion. Its function is as follows. Structural protein that forms a matrix surrounding the mature virion (MV) through interaction with protein A26. Presence of protein A25 in the virion structurally prevents direct virus-cell fusion mechanism. The protein is A-type inclusion protein A25 homolog of Camelus.